The sequence spans 825 residues: Zinc finger protein 229 (825 aa).

Residues 1–26 are disordered; the sequence is METLTSRHEKRALHSQASAISQDREE. The KRAB domain occupies 34–108; sequence LSFKDVAVVF…SHKELSSCKI (75 aa). A C2H2-type 1; degenerate zinc finger spans residues 291-315; that stretch reads KLCQYDEFSEGLRHSAHLNRHQRVP. C2H2-type zinc fingers lie at residues 349–371, 377–399, 405–427, 433–455, 461–483, 489–511, and 517–539; these read YRCD…QGVH, YKCE…QRVH, YKCS…QRLH, YTCS…QHIH, YSCG…QKTH, YQCD…QRVH, and YKCN…QRLH. Lys-543 participates in a covalent cross-link: Glycyl lysine isopeptide (Lys-Gly) (interchain with G-Cter in SUMO2). C2H2-type zinc fingers lie at residues 545-566, 572-594, 600-622, 628-650, 656-678, 684-706, 712-734, 740-762, 768-790, and 796-818; these read YKCE…QRVH, YKCS…QRVH, YVCD…QRVH, YKCA…QRVH, YRCQ…QRVH, YTCD…QRLH, YTCC…KRVH, YRCH…QRVH, and YTCG…QRVH.

Belongs to the krueppel C2H2-type zinc-finger protein family.

The protein localises to the nucleus. Functionally, may be involved in transcriptional regulation. The protein is Zinc finger protein 229 of Homo sapiens (Human).